The sequence spans 507 residues: MASYSVTVSVAGTSINKYPAGSAGFDLAMADSYDPGKQHARRVAAYLPKQQGLIYLPGQQTVLSEDSDQDRPFKQRRYFFYVTGVVEPDCHVTYDIAEDKLTLYVPDFDFKRTIWTGPTLGKDEANQRYDVDRVEYFSALEGDVLRWSQANPSLSIYILHPDQRPVTPLTVAYFYESKSLKHAMDACRVIKDEHEIQLIQRANRVSGAAHRSILANLHHFKNEAQIAGLFIDVCLSLRSKGTAYQTIAGSGSNGATLHYTRNNEPLAGRQMVVLDAGAEWSCYASDVTRSFPIPSSVSGGRDWPSREAEQIYAIVQRMQEECISRVKEGALFFSIHQHAHAIALEELLKLGILRIPQGSTKADLIKAEVTALFFPHGLGHHLGLEVHDVSPDSGTIPVELAIEREKGLMSVTEHRPPCTLSAPPLASGMVITVEPGLYFNRLAIDQARAERDEPNSKGRFVNFDVVERYVDVGGVRIEDDVLVTKDGNKNLTDAPKGKEMLDLIYGR.

Mn(2+)-binding residues include D275, D286, E434, and E478.

It belongs to the peptidase M24B family. It depends on Mn(2+) as a cofactor.

It carries out the reaction Release of any N-terminal amino acid, including proline, that is linked to proline, even from a dipeptide or tripeptide.. Functionally, catalyzes the removal of a penultimate prolyl residue from the N-termini of peptides. The chain is Probable Xaa-Pro aminopeptidase TRV_02643 from Trichophyton verrucosum (strain HKI 0517).